Consider the following 119-residue polypeptide: Ribosome-binding factor A (119 aa).

It belongs to the RbfA family. Monomer. Binds 30S ribosomal subunits, but not 50S ribosomal subunits or 70S ribosomes.

Its subcellular location is the cytoplasm. Its function is as follows. One of several proteins that assist in the late maturation steps of the functional core of the 30S ribosomal subunit. Associates with free 30S ribosomal subunits (but not with 30S subunits that are part of 70S ribosomes or polysomes). Required for efficient processing of 16S rRNA. May interact with the 5'-terminal helix region of 16S rRNA. This Chlorobium phaeovibrioides (strain DSM 265 / 1930) (Prosthecochloris vibrioformis (strain DSM 265)) protein is Ribosome-binding factor A.